We begin with the raw amino-acid sequence, 378 residues long: 1-acyl-sn-glycerol-3-phosphate acyltransferase delta (378 aa).

A helical membrane pass occupies residues 11-31 (FLCHLVFCYVFIASGLIINTV). The HXXXXD motif signature appears at 96 to 101 (HKFEID). 3 consecutive transmembrane segments (helical) span residues 125–145 (ELAY…VFCS), 307–327 (TLVN…QFLV), and 338–358 (LASF…MIGV).

This sequence belongs to the 1-acyl-sn-glycerol-3-phosphate acyltransferase family.

The protein resides in the endoplasmic reticulum membrane. The enzyme catalyses a 1-acyl-sn-glycero-3-phosphate + an acyl-CoA = a 1,2-diacyl-sn-glycero-3-phosphate + CoA. It catalyses the reaction (4Z,7Z,10Z,13Z,16Z,19Z)-docosahexaenoyl-CoA + 1-hexadecanoyl-sn-glycero-3-phosphate = 1-hexadecanoyl-2-(4Z,7Z,10Z,13Z,16Z,19Z-docosahexaenoyl)-sn-glycero-3-phosphate + CoA. It carries out the reaction 1-octadecanoyl-sn-glycero-3-phosphate + (9Z,12Z)-octadecadienoyl-CoA = 1-octadecanoyl-2-(9Z,12Z-octadecadienoyl)-sn-glycero-3-phosphate + CoA. The catalysed reaction is 1-octadecanoyl-sn-glycero-3-phosphate + (4Z,7Z,10Z,13Z,16Z,19Z)-docosahexaenoyl-CoA = 1-octadecanoyl-2-(4Z,7Z,10Z,13Z,16Z,19Z-docosahexaenoyl)-sn-glycero-3-phosphate + CoA. The enzyme catalyses (4Z,7Z,10Z,13Z,16Z,19Z)-docosahexaenoyl-CoA + 1-(9Z-octadecenoyl)-sn-glycero-3-phosphate = 1-(9Z-octadecenoyl)-2-(4Z,7Z,10Z,13Z,16Z,19Z-docosahexaenoyl)-sn-glycero-3-phosphate + CoA. It functions in the pathway phospholipid metabolism; CDP-diacylglycerol biosynthesis; CDP-diacylglycerol from sn-glycerol 3-phosphate: step 2/3. In terms of biological role, converts 1-acyl-sn-glycerol-3-phosphate (lysophosphatidic acid or LPA) into 1,2-diacyl-sn-glycerol-3-phosphate (phosphatidic acid or PA) by incorporating an acyl moiety at the sn-2 position of the glycerol backbone. Exhibits high acyl-CoA specificity for polyunsaturated fatty acyl-CoA, especially docosahexaenoyl-CoA (22:6-CoA, DHA-CoA). This is 1-acyl-sn-glycerol-3-phosphate acyltransferase delta (AGPAT4) from Macaca fascicularis (Crab-eating macaque).